The primary structure comprises 284 residues: GPN-loop GTPase 3 (284 aa).

A GTP-binding site is contributed by 13 to 18 (GSGKST). Residues 72-74 (GPN) carry the Gly-Pro-Asn (GPN)-loop; involved in dimer interface motif. Residue 174–177 (TKMD) participates in GTP binding. Residues 261-284 (KEPKEHEDESSSMFDEYFQEHQNE) form a disordered region.

It belongs to the GPN-loop GTPase family. As to quaternary structure, heterodimer with GPN1. Binds to RNA polymerase II (RNAPII). Interacts directly with subunits RPB4 and RPB7 and the CTD of RPB1.

Its function is as follows. Small GTPase required for proper localization of RNA polymerase II (RNAPII). May act at an RNAP assembly step prior to nuclear import. This is GPN-loop GTPase 3 from Bos taurus (Bovine).